Reading from the N-terminus, the 258-residue chain is L-fucose dehydrogenase (258 aa).

Serine 17, isoleucine 19, arginine 39, histidine 40, glutamate 63, leucine 64, and asparagine 90 together coordinate NADP(+). Beta-L-fucose contacts are provided by asparagine 94, serine 140, lysine 141, glutamine 147, and tyrosine 153. NADP(+)-binding residues include tyrosine 153 and lysine 157. The active-site Proton acceptor is tyrosine 153. The beta-L-fucose site is built by alanine 184 and glutamate 185. Residues valine 186 and threonine 188 each contribute to the NADP(+) site.

Belongs to the short-chain dehydrogenases/reductases (SDR) family. In terms of assembly, homotetramer; dimer of dimers.

It carries out the reaction beta-L-fucose + NADP(+) = L-fucono-1,5-lactone + NADPH + H(+). It catalyses the reaction D-arabinose + NADP(+) = D-arabinono-1,5-lactone + NADPH + H(+). It functions in the pathway carbohydrate degradation; L-fucose degradation. Its function is as follows. L-fucose dehydrogenase involved in an L-fucose degradation pathway. Catalyzes the oxidation of L-fucose to L-fucono-1,5-lactone. Can also act on D-arabinose, with lower catalytic efficiency, and has weak activity with L-galactose and 4-deoxy-L-fucose. Shows a preference for NADP(+) over NAD(+). In Burkholderia multivorans (strain ATCC 17616 / 249), this protein is L-fucose dehydrogenase.